The chain runs to 690 residues: DNA ligase (690 aa).

NAD(+) contacts are provided by residues 36–40 (DAVYD), 85–86 (SL), and Glu-124. Catalysis depends on Lys-126, which acts as the N6-AMP-lysine intermediate. NAD(+) is bound by residues Arg-147, Glu-184, Lys-308, and Lys-332. Positions 426, 429, 444, and 449 each coordinate Zn(2+). In terms of domain architecture, BRCT spans 614–690 (NQSNVFDGKS…INENELKLLL (77 aa)).

The protein belongs to the NAD-dependent DNA ligase family. LigA subfamily. It depends on Mg(2+) as a cofactor. Mn(2+) is required as a cofactor.

The catalysed reaction is NAD(+) + (deoxyribonucleotide)n-3'-hydroxyl + 5'-phospho-(deoxyribonucleotide)m = (deoxyribonucleotide)n+m + AMP + beta-nicotinamide D-nucleotide.. Its function is as follows. DNA ligase that catalyzes the formation of phosphodiester linkages between 5'-phosphoryl and 3'-hydroxyl groups in double-stranded DNA using NAD as a coenzyme and as the energy source for the reaction. It is essential for DNA replication and repair of damaged DNA. The protein is DNA ligase of Prochlorococcus marinus (strain NATL1A).